Here is a 189-residue protein sequence, read N- to C-terminus: Probable DNA-directed RNA polymerase subunit delta (189 aa).

Residues 14–81 (LSMIEVAHAI…GENVWALRTW (68 aa)) enclose the HTH HARE-type domain. Composition is skewed to acidic residues over residues 90–100 (EVDHPEDDGDE) and 118–189 (EGDD…EDEE). The interval 90 to 189 (EVDHPEDDGD…DDLDDDEDEE (100 aa)) is disordered.

It belongs to the RpoE family. RNAP is composed of a core of 2 alpha, a beta and a beta' subunits. The core is associated with a delta subunit and one of several sigma factors.

Functionally, participates in both the initiation and recycling phases of transcription. In the presence of the delta subunit, RNAP displays an increased specificity of transcription, a decreased affinity for nucleic acids, and an increased efficiency of RNA synthesis because of enhanced recycling. In Lactobacillus delbrueckii subsp. bulgaricus (strain ATCC 11842 / DSM 20081 / BCRC 10696 / JCM 1002 / NBRC 13953 / NCIMB 11778 / NCTC 12712 / WDCM 00102 / Lb 14), this protein is Probable DNA-directed RNA polymerase subunit delta.